The chain runs to 306 residues: Homoserine kinase (306 aa).

90–100 (PLARGLGSSAS) contacts ATP.

The protein belongs to the GHMP kinase family. Homoserine kinase subfamily.

The protein localises to the cytoplasm. It catalyses the reaction L-homoserine + ATP = O-phospho-L-homoserine + ADP + H(+). The protein operates within amino-acid biosynthesis; L-threonine biosynthesis; L-threonine from L-aspartate: step 4/5. In terms of biological role, catalyzes the ATP-dependent phosphorylation of L-homoserine to L-homoserine phosphate. The polypeptide is Homoserine kinase (Staphylococcus epidermidis (strain ATCC 35984 / DSM 28319 / BCRC 17069 / CCUG 31568 / BM 3577 / RP62A)).